The sequence spans 340 residues: Dihydroorotate dehydrogenase (quinone) (340 aa).

FMN contacts are provided by residues A61 to K65 and T85. Residue K65 participates in substrate binding. Residue N110 to F114 participates in substrate binding. FMN-binding residues include N138 and N171. N171 is a substrate binding site. The active-site Nucleophile is S174. N176 contributes to the substrate binding site. 2 residues coordinate FMN: K216 and T244. N245–T246 is a substrate binding site. Residues G267, G296, and Y317–S318 contribute to the FMN site.

This sequence belongs to the dihydroorotate dehydrogenase family. Type 2 subfamily. In terms of assembly, monomer. FMN serves as cofactor.

The protein resides in the cell membrane. It catalyses the reaction (S)-dihydroorotate + a quinone = orotate + a quinol. It functions in the pathway pyrimidine metabolism; UMP biosynthesis via de novo pathway; orotate from (S)-dihydroorotate (quinone route): step 1/1. In terms of biological role, catalyzes the conversion of dihydroorotate to orotate with quinone as electron acceptor. The chain is Dihydroorotate dehydrogenase (quinone) from Ectopseudomonas mendocina (strain ymp) (Pseudomonas mendocina).